Consider the following 275-residue polypeptide: tRNA pseudouridine synthase B (275 aa).

Asp-38 functions as the Nucleophile in the catalytic mechanism.

The protein belongs to the pseudouridine synthase TruB family. Type 1 subfamily.

It catalyses the reaction uridine(55) in tRNA = pseudouridine(55) in tRNA. Responsible for synthesis of pseudouridine from uracil-55 in the psi GC loop of transfer RNAs. This is tRNA pseudouridine synthase B from Nitratiruptor sp. (strain SB155-2).